Here is a 274-residue protein sequence, read N- to C-terminus: Diaminopimelate epimerase (274 aa).

Substrate contacts are provided by Asn-11, Gln-44, and Asn-64. Cys-73 acts as the Proton donor in catalysis. Substrate contacts are provided by residues 74–75, Asn-157, Asn-190, and 208–209; these read GN and ER. The active-site Proton acceptor is Cys-217. Residue 218-219 participates in substrate binding; sequence GS.

It belongs to the diaminopimelate epimerase family. As to quaternary structure, homodimer.

It localises to the cytoplasm. It carries out the reaction (2S,6S)-2,6-diaminopimelate = meso-2,6-diaminopimelate. It functions in the pathway amino-acid biosynthesis; L-lysine biosynthesis via DAP pathway; DL-2,6-diaminopimelate from LL-2,6-diaminopimelate: step 1/1. Functionally, catalyzes the stereoinversion of LL-2,6-diaminopimelate (L,L-DAP) to meso-diaminopimelate (meso-DAP), a precursor of L-lysine and an essential component of the bacterial peptidoglycan. The chain is Diaminopimelate epimerase from Serratia proteamaculans (strain 568).